The primary structure comprises 574 residues: Proline--tRNA ligase (574 aa).

Belongs to the class-II aminoacyl-tRNA synthetase family. ProS type 1 subfamily. As to quaternary structure, homodimer.

It localises to the cytoplasm. The catalysed reaction is tRNA(Pro) + L-proline + ATP = L-prolyl-tRNA(Pro) + AMP + diphosphate. In terms of biological role, catalyzes the attachment of proline to tRNA(Pro) in a two-step reaction: proline is first activated by ATP to form Pro-AMP and then transferred to the acceptor end of tRNA(Pro). As ProRS can inadvertently accommodate and process non-cognate amino acids such as alanine and cysteine, to avoid such errors it has two additional distinct editing activities against alanine. One activity is designated as 'pretransfer' editing and involves the tRNA(Pro)-independent hydrolysis of activated Ala-AMP. The other activity is designated 'posttransfer' editing and involves deacylation of mischarged Ala-tRNA(Pro). The misacylated Cys-tRNA(Pro) is not edited by ProRS. This Nitrosococcus oceani (strain ATCC 19707 / BCRC 17464 / JCM 30415 / NCIMB 11848 / C-107) protein is Proline--tRNA ligase.